A 100-amino-acid chain; its full sequence is Urease subunit gamma (100 aa).

Belongs to the urease gamma subunit family. In terms of assembly, heterotrimer of UreA (gamma), UreB (beta) and UreC (alpha) subunits. Three heterotrimers associate to form the active enzyme.

It is found in the cytoplasm. It catalyses the reaction urea + 2 H2O + H(+) = hydrogencarbonate + 2 NH4(+). Its pathway is nitrogen metabolism; urea degradation; CO(2) and NH(3) from urea (urease route): step 1/1. The polypeptide is Urease subunit gamma (Chromohalobacter salexigens (strain ATCC BAA-138 / DSM 3043 / CIP 106854 / NCIMB 13768 / 1H11)).